We begin with the raw amino-acid sequence, 61 residues long: Small ribosomal subunit protein uS14 (61 aa).

Zn(2+)-binding residues include Cys24, Cys27, Cys40, and Cys43.

This sequence belongs to the universal ribosomal protein uS14 family. Zinc-binding uS14 subfamily. In terms of assembly, part of the 30S ribosomal subunit. Contacts proteins S3 and S10. Zn(2+) serves as cofactor.

In terms of biological role, binds 16S rRNA, required for the assembly of 30S particles and may also be responsible for determining the conformation of the 16S rRNA at the A site. The sequence is that of Small ribosomal subunit protein uS14 from Mycoplasmoides gallisepticum (strain R(low / passage 15 / clone 2)) (Mycoplasma gallisepticum).